The sequence spans 508 residues: 2'-5'-oligoadenylate synthase-like protein 2 (508 aa).

Ser69 is an ATP binding site. 3 residues coordinate Mg(2+): Asp81, Asp83, and Asp154. ATP-binding residues include Arg213 and Lys216. In terms of domain architecture, Ubiquitin-like spans 435 to 473 (ILVFVKYPGGQSKPFTIDPDDTILDLKEKIEDAGGPCAE).

The protein belongs to the 2-5A synthase family. Requires Mg(2+) as cofactor. Strongly expressed in spleen dendritic cells, whereas, in bone marrow-derived dendritic cells, the amount increases during the maturation process. Expressed in many organs, the highest levels being in thymus, lung, and bone marrow.

The enzyme catalyses 3 ATP = 5'-triphosphoadenylyl-(2'-&gt;5')-adenylyl-(2'-&gt;5')-adenosine + 2 diphosphate. Its activity is regulated as follows. Produced as a latent enzyme which is activated by dsRNA generated during the course of viral infection. The dsRNA activator must be at least 15 nucleotides long, and no modification of the 2'-hydroxyl group is tolerated. ssRNA or dsDNA do not act as activators. Functionally, interferon-induced, dsRNA-activated antiviral enzyme which plays a critical role in cellular innate antiviral response. Synthesizes oligomers of 2'-5'-oligoadenylates (2-5A) from ATP which then bind to the inactive monomeric form of ribonuclease L (RNase L) leading to its dimerization and subsequent activation. Activation of RNase L leads to degradation of cellular as well as viral RNA, resulting in the inhibition of protein synthesis, thus terminating viral replication. Can mediate the antiviral effect via the classical RNase L-dependent pathway or an alternative antiviral pathway independent of RNase L. This is 2'-5'-oligoadenylate synthase-like protein 2 (Oasl2) from Mus musculus (Mouse).